A 515-amino-acid chain; its full sequence is Histidine ammonia-lyase (515 aa).

Residues alanine 146 to glycine 148 constitute a cross-link (5-imidazolinone (Ala-Gly)). The residue at position 147 (serine 147) is a 2,3-didehydroalanine (Ser).

This sequence belongs to the PAL/histidase family. Contains an active site 4-methylidene-imidazol-5-one (MIO), which is formed autocatalytically by cyclization and dehydration of residues Ala-Ser-Gly.

The protein localises to the cytoplasm. It carries out the reaction L-histidine = trans-urocanate + NH4(+). It functions in the pathway amino-acid degradation; L-histidine degradation into L-glutamate; N-formimidoyl-L-glutamate from L-histidine: step 1/3. The polypeptide is Histidine ammonia-lyase (hutH) (Ralstonia nicotianae (strain ATCC BAA-1114 / GMI1000) (Ralstonia solanacearum)).